Reading from the N-terminus, the 299-residue chain is GTPase Era (299 aa).

The Era-type G domain occupies 4–171; the sequence is KSGFVAILGR…VDILSENLEE (168 aa). A G1 region spans residues 12 to 19; the sequence is GRPNVGKS. 12–19 is a binding site for GTP; the sequence is GRPNVGKS. The tract at residues 38–42 is G2; the sequence is QTTRN. Positions 59–62 are G3; it reads DTPG. GTP is bound by residues 59–63 and 121–124; these read DTPGI and NKID. Positions 121–124 are G4; that stretch reads NKID. The interval 150-152 is G5; the sequence is ISA. In terms of domain architecture, KH type-2 spans 202–280; that stretch reads TREEIPHSVA…FLETWVKVKK (79 aa).

This sequence belongs to the TRAFAC class TrmE-Era-EngA-EngB-Septin-like GTPase superfamily. Era GTPase family. As to quaternary structure, monomer.

It localises to the cytoplasm. The protein resides in the cell membrane. Functionally, an essential GTPase that binds both GDP and GTP, with rapid nucleotide exchange. Plays a role in 16S rRNA processing and 30S ribosomal subunit biogenesis and possibly also in cell cycle regulation and energy metabolism. The polypeptide is GTPase Era (Streptococcus gordonii (strain Challis / ATCC 35105 / BCRC 15272 / CH1 / DL1 / V288)).